The following is a 454-amino-acid chain: Gastrin/cholecystokinin type B receptor (454 aa).

At 1-57 (MELLKPNRSVLGSGPGPGASLCRSGGPLLNGSGTGNLSCEPPRIRGAGTRELELAIR) the chain is on the extracellular side. Residues N7, N30, and N36 are each glycosylated (N-linked (GlcNAc...) asparagine). The chain crosses the membrane as a helical span at residues 58–79 (VTLYAVIFLMSVGGNVLIIVVL). At 80 to 87 (GLSRRLRT) the chain is on the cytoplasmic side. The chain crosses the membrane as a helical span at residues 88–109 (VTNAFLLSLAVSDLLLAVACMP). Topologically, residues 110–131 (FTLLPNLMGTFIFGTVVCKAVS) are extracellular. C127 and C205 form a disulfide bridge. The chain crosses the membrane as a helical span at residues 132 to 150 (YFMGVSVSVSTLSLVAIAL). The Cytoplasmic portion of the chain corresponds to 151–170 (ERYSAICRPLQARVWQTRSH). The helical transmembrane segment at 171–189 (AARVIVATWMLSGLLMVPY) threads the bilayer. Residues 190 to 219 (PVYTAVQPAGPRVLQCMHRWPSARVRQTWS) lie on the Extracellular side of the membrane. A helical transmembrane segment spans residues 220–242 (VLLLLLLFFVPGVVMAVAYGLIS). The Cytoplasmic segment spans residues 243–340 (RELYLGLRFD…KLLAKKRVVR (98 aa)). The disordered stretch occupies residues 257–284 (SESQSRVGSQGGLPGGTGQGPAQANGRC). The segment covering 265–275 (SQGGLPGGTGQ) has biased composition (gly residues). A helical transmembrane segment spans residues 341-362 (MLLVIVVLFFLCWLPVYSANTW). Residues 363 to 380 (RAFDGPGAHRALSGAPIS) are Extracellular-facing. The chain crosses the membrane as a helical span at residues 381–401 (FIHLLTYASACVNPLVYCFMH). Residues 402–454 (RRFRQACLDTCTRCCPRPPRARPRPLPDEDPPTPSIASLSRLSYTTISTLGPG) lie on the Cytoplasmic side of the membrane. C415 carries S-palmitoyl cysteine lipidation. The tract at residues 422–441 (ARPRPLPDEDPPTPSIASLS) is disordered.

This sequence belongs to the G-protein coupled receptor 1 family.

The protein resides in the cell membrane. Functionally, receptor for gastrin and cholecystokinin. The CCK-B receptors occur throughout the central nervous system where they modulate anxiety, analgesia, arousal, and neuroleptic activity. This receptor mediates its action by association with G proteins that activate a phosphatidylinositol-calcium second messenger system. This chain is Gastrin/cholecystokinin type B receptor (CCKBR), found in Bos taurus (Bovine).